The chain runs to 213 residues: Skin granule protein (213 aa).

The first 26 residues, 1–26 (METMYHRFLCIPFLLILGLAQGQSKG), serve as a signal peptide directing secretion. 3 repeat units span residues 27-48 (LQTV…IRTG), 49-70 (LQPI…IRTG), and 71-92 (LQPI…IRTG). Positions 27–104 (LQTVTTFRTG…PIATFQTGVQ (78 aa)) are 4 X 22 AA approximate tandem repeats. The stretch at 93–104 (LQPIATFQTGVQ) is one 4; truncated repeat. Residues 162-213 (WHGGRNGHKMKKLGKKKHHKNRHGGKNHHKMKKIGKHHGGGRKFGKKHRHHK) are disordered. Over residues 166-213 (RNGHKMKKLGKKKHHKNRHGGKNHHKMKKIGKHHGGGRKFGKKHRHHK) the composition is skewed to basic residues.

It localises to the secreted. The chain is Skin granule protein (sgp) from Xenopus laevis (African clawed frog).